The primary structure comprises 241 residues: Octanoyltransferase (241 aa).

In terms of domain architecture, BPL/LPL catalytic spans 50–238 (KIAHEQVWLL…AFEQIFGPTI (189 aa)). Residues 89 to 96 (RGGEFTYH), 169 to 171 (AIG), and 182 to 184 (GIS) each bind substrate. Cysteine 200 functions as the Acyl-thioester intermediate in the catalytic mechanism.

This sequence belongs to the LipB family.

It localises to the cytoplasm. It catalyses the reaction octanoyl-[ACP] + L-lysyl-[protein] = N(6)-octanoyl-L-lysyl-[protein] + holo-[ACP] + H(+). The protein operates within protein modification; protein lipoylation via endogenous pathway; protein N(6)-(lipoyl)lysine from octanoyl-[acyl-carrier-protein]: step 1/2. Catalyzes the transfer of endogenously produced octanoic acid from octanoyl-acyl-carrier-protein onto the lipoyl domains of lipoate-dependent enzymes. Lipoyl-ACP can also act as a substrate although octanoyl-ACP is likely to be the physiological substrate. This Bartonella bacilliformis (strain ATCC 35685 / KC583 / Herrer 020/F12,63) protein is Octanoyltransferase.